A 293-amino-acid chain; its full sequence is Pyridoxal 5'-phosphate synthase subunit PdxS (293 aa).

Asp-23 provides a ligand contact to D-ribose 5-phosphate. The active-site Schiff-base intermediate with D-ribose 5-phosphate is the Lys-80. Gly-152 contributes to the D-ribose 5-phosphate binding site. Arg-164 serves as a coordination point for D-glyceraldehyde 3-phosphate. D-ribose 5-phosphate is bound by residues Gly-213 and 234–235 (GS).

Belongs to the PdxS/SNZ family. In the presence of PdxT, forms a dodecamer of heterodimers.

It catalyses the reaction aldehydo-D-ribose 5-phosphate + D-glyceraldehyde 3-phosphate + L-glutamine = pyridoxal 5'-phosphate + L-glutamate + phosphate + 3 H2O + H(+). It participates in cofactor biosynthesis; pyridoxal 5'-phosphate biosynthesis. Functionally, catalyzes the formation of pyridoxal 5'-phosphate from ribose 5-phosphate (RBP), glyceraldehyde 3-phosphate (G3P) and ammonia. The ammonia is provided by the PdxT subunit. Can also use ribulose 5-phosphate and dihydroxyacetone phosphate as substrates, resulting from enzyme-catalyzed isomerization of RBP and G3P, respectively. The chain is Pyridoxal 5'-phosphate synthase subunit PdxS from Dehalococcoides mccartyi (strain ATCC BAA-2100 / JCM 16839 / KCTC 5957 / BAV1).